The sequence spans 521 residues: Tigger transposable element-derived protein 6 (521 aa).

Positions 3-54 (NKGNKKRRQFSLEEKMKVVGAVDSGKRKGDVAKEFGITPSTLSTFLKDRTKF) constitute an HTH psq-type domain. 2 consecutive DNA-binding regions (H-T-H motif) follow at residues 30–50 (KGDVAKEFGITPSTLSTFLKD) and 99–130 (SVIRKKALNLANMLGYDNFQASVGWLNRFRDR). In terms of domain architecture, HTH CENPB-type spans 66–137 (QRKRMRSALY…RDRHGIALKA (72 aa)). In terms of domain architecture, DDE-1 spans 170-372 (YSPDDIFNAD…VKPSTVVKCW (203 aa)).

Belongs to the tigger transposable element derived protein family.

The protein localises to the nucleus. This is Tigger transposable element-derived protein 6 (TIGD6) from Homo sapiens (Human).